The sequence spans 483 residues: E3 ubiquitin-protein ligase TRIM50 (483 aa).

An RING-type zinc finger spans residues Cys-16–Arg-57. The segment at Ile-84–Val-125 adopts a B box-type zinc-finger fold. Zn(2+) contacts are provided by Cys-89, His-92, Cys-111, and His-117. 2 coiled-coil regions span residues Thr-127–Asp-169 and Gly-203–Ser-236. Residues Asp-275 to Gly-474 enclose the B30.2/SPRY domain. At Lys-372 the chain carries N6-acetyllysine.

It belongs to the TRIM/RBCC family. As to quaternary structure, can form dimers and trimers. Interacts with several E2 ubiquitin-conjugating enzymes, including UBE2L6, UBE2E1, UBE2E3. No interaction with UBE2H. Interacts with BECN1. Interacts with SQSTM1. Interacts with NLRP3. Post-translationally, auto-ubiquitinated. Acetylated by EP300 and KAT2B. HDAC6 drives TRIM50 deacetylation. Acetylation antagonizes with TRIM50 ubiquitination. In terms of tissue distribution, expressed in the stomach.

The protein resides in the cytoplasm. It carries out the reaction S-ubiquitinyl-[E2 ubiquitin-conjugating enzyme]-L-cysteine + [acceptor protein]-L-lysine = [E2 ubiquitin-conjugating enzyme]-L-cysteine + N(6)-ubiquitinyl-[acceptor protein]-L-lysine.. Its function is as follows. E3 ubiquitin-protein ligase that ubiquitinates Beclin-1/BECN1 in a 'Lys-63'-dependent manner enhancing its binding to ULK1. In turn, promotes starvation-induced autophagy activation. Also interacts with p62/SQSTM1 protein and thereby induces the formation and the autophagy clearance of aggresome-associated polyubiquitinated proteins through HDAC6 interaction. Also promotes NLRP3 inflammasome activation by directly inducing NLRP3 oligomerization independent of its E3 ligase function. The protein is E3 ubiquitin-protein ligase TRIM50 (Trim50) of Mus musculus (Mouse).